The chain runs to 269 residues: UPF0761 membrane protein HI_0276 (269 aa).

The next 6 helical transmembrane spans lie at Met-32 to Phe-52, Met-89 to Asp-109, Phe-128 to Ile-148, Leu-168 to Val-188, Phe-203 to Phe-223, and Ala-232 to Val-252.

This sequence belongs to the UPF0761 family.

Its subcellular location is the cell inner membrane. This Haemophilus influenzae (strain ATCC 51907 / DSM 11121 / KW20 / Rd) protein is UPF0761 membrane protein HI_0276.